The primary structure comprises 266 residues: MLTFIGLGLFDEYDISLKGLEAVREADLVYAEFYTSCLMGTNPEKMEKLYGKKVHLLSREDVEQQPDWLDKAKDKNVAFLTGGDTMVSTTHVDLRLRAEKLGIETHLIHGASIASAVSGLTGLQNYRFGKSASIPYPYESRRGAIIISETPYDTIKQNSELGLHTMIFLDIDKDKGYMTANHALELLLEVEKRRGEGIMERAVAVGIARAGSEKPVVKADYAESLKDFDFGNPLHILVVPGKLHFLEAEALVKLAAGPGKIMEETE.

Residues Leu-9, Asp-84, Val-87, 112–113 (SI), Leu-169, Ala-210, and His-235 each bind S-adenosyl-L-methionine.

This sequence belongs to the diphthine synthase family. In terms of assembly, homodimer.

The catalysed reaction is 2-[(3S)-amino-3-carboxypropyl]-L-histidyl-[translation elongation factor 2] + 3 S-adenosyl-L-methionine = diphthine-[translation elongation factor 2] + 3 S-adenosyl-L-homocysteine + 3 H(+). It functions in the pathway protein modification; peptidyl-diphthamide biosynthesis. Its function is as follows. S-adenosyl-L-methionine-dependent methyltransferase that catalyzes the trimethylation of the amino group of the modified target histidine residue in translation elongation factor 2 (EF-2), to form an intermediate called diphthine. The three successive methylation reactions represent the second step of diphthamide biosynthesis. The polypeptide is Diphthine synthase (Methanosarcina acetivorans (strain ATCC 35395 / DSM 2834 / JCM 12185 / C2A)).